A 145-amino-acid chain; its full sequence is 3-hydroxyacyl-[acyl-carrier-protein] dehydratase FabZ (145 aa).

Histidine 47 is an active-site residue.

This sequence belongs to the thioester dehydratase family. FabZ subfamily.

It localises to the cytoplasm. It carries out the reaction a (3R)-hydroxyacyl-[ACP] = a (2E)-enoyl-[ACP] + H2O. Involved in unsaturated fatty acids biosynthesis. Catalyzes the dehydration of short chain beta-hydroxyacyl-ACPs and long chain saturated and unsaturated beta-hydroxyacyl-ACPs. This is 3-hydroxyacyl-[acyl-carrier-protein] dehydratase FabZ from Ruthia magnifica subsp. Calyptogena magnifica.